The sequence spans 146 residues: Large ribosomal subunit protein uL15 (146 aa).

The disordered stretch occupies residues 1 to 57; sequence MKLFELQPAPGSKKLPKRKGRGHGTGNGKTAGRGHKGQNARSGGGVRPGFEGGQMPL. The span at 42-52 shows a compositional bias: gly residues; it reads SGGGVRPGFEG.

It belongs to the universal ribosomal protein uL15 family. Part of the 50S ribosomal subunit.

Binds to the 23S rRNA. The protein is Large ribosomal subunit protein uL15 of Acetivibrio thermocellus (strain ATCC 27405 / DSM 1237 / JCM 9322 / NBRC 103400 / NCIMB 10682 / NRRL B-4536 / VPI 7372) (Clostridium thermocellum).